The chain runs to 332 residues: L-lactate dehydrogenase A chain (332 aa).

Residues 29–57 (GMVGMASAISVLLKDLCDELALVDVMEDK) and Arg-99 contribute to the NAD(+) site. 3 residues coordinate substrate: Arg-106, Asn-138, and Arg-169. Asn-138 lines the NAD(+) pocket. The active-site Proton acceptor is the His-193. Thr-248 lines the substrate pocket.

Belongs to the LDH/MDH superfamily. LDH family. As to quaternary structure, homotetramer.

It is found in the cytoplasm. It carries out the reaction (S)-lactate + NAD(+) = pyruvate + NADH + H(+). Its pathway is fermentation; pyruvate fermentation to lactate; (S)-lactate from pyruvate: step 1/1. In terms of biological role, interconverts simultaneously and stereospecifically pyruvate and lactate with concomitant interconversion of NADH and NAD(+). This is L-lactate dehydrogenase A chain (ldha) from Fundulus heteroclitus (Killifish).